We begin with the raw amino-acid sequence, 272 residues long: Centromere protein V-like protein 3 (272 aa).

Residues 1-17 show a composition bias toward basic residues; the sequence is MGRVRNRATAQRRRRKR. Disordered regions lie at residues 1-23 and 65-95; these read MGRVRNRATAQRRRRKRPGDPPA and RRAREAGSRDPLPSAPLPDPPAPAESPKELD. Over residues 77-88 the composition is skewed to pro residues; sequence PSAPLPDPPAPA. One can recognise a CENP-V/GFA domain in the interval 133 to 246; sequence HTGGCHCGAV…EEVGGGDPGE (114 aa). The Zn(2+) site is built by C137, C139, C157, C159, C162, C201, and C204. Positions 240–272 are disordered; sequence GGGDPGEEAAEEHKAIHKTSSQSAPACPREQEQ.

Belongs to the Gfa family. Zn(2+) serves as cofactor.

The polypeptide is Centromere protein V-like protein 3 (Homo sapiens (Human)).